The sequence spans 281 residues: Ribosomal RNA large subunit methyltransferase J (281 aa).

S-adenosyl-L-methionine contacts are provided by residues H19, H42, S101, E119, 144–145, and D165; that span reads NG. Catalysis depends on D165, which acts as the Proton acceptor.

The protein belongs to the RlmJ family. Monomer.

It carries out the reaction adenosine(2030) in 23S rRNA + S-adenosyl-L-methionine = N(6)-methyladenosine(2030) in 23S rRNA + S-adenosyl-L-homocysteine + H(+). In terms of biological role, specifically methylates the adenine in position 2030 of 23S rRNA. This is Ribosomal RNA large subunit methyltransferase J from Haemophilus influenzae (strain ATCC 51907 / DSM 11121 / KW20 / Rd).